A 450-amino-acid polypeptide reads, in one-letter code: UDP-N-acetylmuramoylalanine--D-glutamate ligase (450 aa).

Position 111 to 117 (111 to 117 (GTNGKST)) interacts with ATP.

This sequence belongs to the MurCDEF family.

The protein resides in the cytoplasm. It carries out the reaction UDP-N-acetyl-alpha-D-muramoyl-L-alanine + D-glutamate + ATP = UDP-N-acetyl-alpha-D-muramoyl-L-alanyl-D-glutamate + ADP + phosphate + H(+). Its pathway is cell wall biogenesis; peptidoglycan biosynthesis. In terms of biological role, cell wall formation. Catalyzes the addition of glutamate to the nucleotide precursor UDP-N-acetylmuramoyl-L-alanine (UMA). This chain is UDP-N-acetylmuramoylalanine--D-glutamate ligase, found in Rickettsia bellii (strain RML369-C).